The sequence spans 366 residues: Anthranilate phosphoribosyltransferase (366 aa).

Residues Gly-79, 82-83 (GD), Thr-87, 89-92 (NIST), 107-115 (KHGNRAATS), and Ser-119 each bind 5-phospho-alpha-D-ribose 1-diphosphate. Gly-79 provides a ligand contact to anthranilate. Ser-91 serves as a coordination point for Mg(2+). Anthranilate is bound at residue Asn-110. Arg-165 contributes to the anthranilate binding site. Mg(2+) is bound by residues Asp-223 and Glu-224. The interval 342–366 (ESLSGKSMSMRSRTSILSPASGERV) is disordered. Residues 345–359 (SGKSMSMRSRTSILS) are compositionally biased toward polar residues.

It belongs to the anthranilate phosphoribosyltransferase family. Homodimer. Mg(2+) is required as a cofactor.

The enzyme catalyses N-(5-phospho-beta-D-ribosyl)anthranilate + diphosphate = 5-phospho-alpha-D-ribose 1-diphosphate + anthranilate. The protein operates within amino-acid biosynthesis; L-tryptophan biosynthesis; L-tryptophan from chorismate: step 2/5. Its function is as follows. Catalyzes the transfer of the phosphoribosyl group of 5-phosphorylribose-1-pyrophosphate (PRPP) to anthranilate to yield N-(5'-phosphoribosyl)-anthranilate (PRA). The polypeptide is Anthranilate phosphoribosyltransferase (Methanosarcina barkeri (strain Fusaro / DSM 804)).